The chain runs to 689 residues: MAVVSAVRWLGLRSRLGQPLTGRRAGLCEQARSCRFYSGSATLSKVEGTDVTGIEEVVIPKKKTWDKVAVLQALASTVNRDTTAVPYVFQDDPYLMPASSLESRSFLLAKKSGENVAKFIINSYPKYFQKDIAEPHIPCLMPEYFEPQIKDISEAALKERIELRKVKASVDMFDQLLQAGTTVSLETTNSLLDLLCYYGDQEPSTDYHFQQTGQSEALEEENDETSRRKAGHQFGVTWRAKNNAERIFSLMPEKNEHSYCTMIRGMVKHRAYEQALNLYTELLNNRLHADVYTFNALIEATVCAINEKFEEKWSKILELLRHMVAQKVKPNLQTFNTILKCLRRFHVFARSPALQVLREMKAIGIEPSLATYHHIIRLFDQPGDPLKRSSFIIYDIMNELMGKRFSPKDPDDDKFFQSAMSICSSLRDLELAYQVHGLLKTGDNWKFIGPDQHRNFYYSKFFDLICLMEQIDVTLKWYEDLIPSAYFPHSQTMIHLLQALDVANRLEVIPKIWKDSKEYGHTFRSDLREEILMLMARDKHPPELQVAFADCAADIKSAYESQPIRQTAQDWPATSLNCIAILFLRAGRTQEAWKMLGLFRKHNKIPRSELLNELMDSAKVSNSPSQAIEVVELASAFSLPICEGLTQRVMSDFAINQEQKEALSNLTALTSDSDTDSSSDSDSDTSEGK.

Residues 1-37 constitute a mitochondrion transit peptide; that stretch reads MAVVSAVRWLGLRSRLGQPLTGRRAGLCEQARSCRFY. Residue lysine 126 is modified to N6-acetyllysine. PPR repeat units follow at residues 149-183, 184-219, 255-289, 290-330, 331-367, 368-409, 412-446, 454-488, 489-523, and 572-606; these read IKDISEAALKERIELRKVKASVDMFDQLLQAGTTV, SLETTNSLLDLLCYYGDQEPSTDYHFQQTGQSEALE, NEHSYCTMIRGMVKHRAYEQALNLYTELLNNRLHA, DVYT…KVKP, NLQTFNTILKCLRRFHVFARSPALQVLREMKAIGIEP, SLAT…SPKD, DDKFFQSAMSICSSLRDLELAYQVHGLLKTGDNWK, RNFYYSKFFDLICLMEQIDVTLKWYEDLIPSAYFP, HSQTMIHLLQALDVANRLEVIPKIWKDSKEYGHTF, and PATSLNCIAILFLRAGRTQEAWKMLGLFRKHNKIP. Residues 665 to 689 are disordered; it reads NLTALTSDSDTDSSSDSDSDTSEGK. Positions 673–689 are enriched in acidic residues; sequence SDTDSSSDSDSDTSEGK.

This sequence belongs to the mitochondrion-specific ribosomal protein mS39 family. Component of the mitochondrial small ribosomal subunit (mt-SSU). Mature mammalian 55S mitochondrial ribosomes consist of a small (28S) and a large (39S) subunit. The 28S small subunit contains a 12S ribosomal RNA (12S mt-rRNA) and 30 different proteins. The 39S large subunit contains a 16S rRNA (16S mt-rRNA), a copy of mitochondrial valine transfer RNA (mt-tRNA(Val)), which plays an integral structural role, and 52 different proteins. Associated with the 12S mitochondrial rRNA (12S mt-rRNA). In terms of tissue distribution, abundant in testes, skeletal muscle and heart tissue.

The protein localises to the mitochondrion. In terms of biological role, mitochondrial RNA-binding protein that has a role in mitochondrial translation. The polypeptide is Small ribosomal subunit protein mS39 (PTCD3) (Homo sapiens (Human)).